We begin with the raw amino-acid sequence, 832 residues long: Cation/H(+) antiporter 21 (832 aa).

The next 12 membrane-spanning stretches (helical) occupy residues 33–55 (ISAAAPFFMTQLSVANLTYRILY), 61–81 (LCLPPFVAQILCGLLFSPTVL), 99–119 (LLETFANLALVYNVFLLGLGL), 132–152 (VIIAIVGLLAALLAGAGLYYL), 161–181 (ILAGCMYWSIAFGCTNFPDLA), 200–220 (CAAVVTDLCTWILFIFGMAIF), 236–256 (STIAFVLLCYFVIQPGVAWIF), 278–298 (IICSLITEVCGVHSITGAFLF), 319–339 (FLSGMLMPLFYIICGLRADIG), 352–372 (VVTSASVMVKILSTMFCSIFL), 379–399 (GLAIGALMNTKGTMALVILNA), and 413–433 (HLTLAFLVMSMVVQPLLAIAY). A compositionally biased stretch (polar residues) spans 792 to 802 (RQTAENNNQEP). Residues 792–832 (RQTAENNNQEPVQGKAKTDHEATPFMEDEDDEVEHQYSMRR) are disordered.

It belongs to the monovalent cation:proton antiporter 2 (CPA2) transporter (TC 2.A.37) family. CHX (TC 2.A.37.4) subfamily. Specifically expressed in root endodermal cells. Expressed in seedlings, roots, leaves, flowers, flower buds and pollen.

The protein localises to the cell membrane. Operates as a Na(+)/H(+) antiporter that plays a role in regulation of xylem Na(+) concentration and, consequently, Na(+) accumulation in the leaf. Required for pollen tube guidance, but not for normal pollen development. May also be involved in the development or function of the female gametophyte. The polypeptide is Cation/H(+) antiporter 21 (CHX21) (Arabidopsis thaliana (Mouse-ear cress)).